We begin with the raw amino-acid sequence, 159 residues long: Ribosomal RNA large subunit methyltransferase H (159 aa).

S-adenosyl-L-methionine contacts are provided by residues Leu76, Gly108, and 127-132 (FSKMTF).

This sequence belongs to the RNA methyltransferase RlmH family. Homodimer.

It is found in the cytoplasm. The catalysed reaction is pseudouridine(1915) in 23S rRNA + S-adenosyl-L-methionine = N(3)-methylpseudouridine(1915) in 23S rRNA + S-adenosyl-L-homocysteine + H(+). Functionally, specifically methylates the pseudouridine at position 1915 (m3Psi1915) in 23S rRNA. In Bifidobacterium animalis subsp. lactis (strain AD011), this protein is Ribosomal RNA large subunit methyltransferase H.